A 437-amino-acid chain; its full sequence is Kynureninase (437 aa).

Pyridoxal 5'-phosphate contacts are provided by residues Leu99, Thr100, 127–130 (FPSD), Ser183, Asp212, His215, and Tyr237. N6-(pyridoxal phosphate)lysine is present on Lys238. Pyridoxal 5'-phosphate-binding residues include Trp267 and Asn295.

This sequence belongs to the kynureninase family. In terms of assembly, homodimer. The cofactor is pyridoxal 5'-phosphate.

It is found in the cytoplasm. The enzyme catalyses L-kynurenine + H2O = anthranilate + L-alanine + H(+). It catalyses the reaction 3-hydroxy-L-kynurenine + H2O = 3-hydroxyanthranilate + L-alanine + H(+). The protein operates within amino-acid degradation; L-kynurenine degradation; L-alanine and anthranilate from L-kynurenine: step 1/1. It functions in the pathway cofactor biosynthesis; NAD(+) biosynthesis; quinolinate from L-kynurenine: step 2/3. Its function is as follows. Catalyzes the cleavage of L-kynurenine (L-Kyn) and L-3-hydroxykynurenine (L-3OHKyn) into anthranilic acid (AA) and 3-hydroxyanthranilic acid (3-OHAA), respectively. In Yarrowia lipolytica (strain CLIB 122 / E 150) (Yeast), this protein is Kynureninase.